We begin with the raw amino-acid sequence, 177 residues long: Large ribosomal subunit protein uL6 (177 aa).

Belongs to the universal ribosomal protein uL6 family. In terms of assembly, part of the 50S ribosomal subunit.

Functionally, this protein binds to the 23S rRNA, and is important in its secondary structure. It is located near the subunit interface in the base of the L7/L12 stalk, and near the tRNA binding site of the peptidyltransferase center. The sequence is that of Large ribosomal subunit protein uL6 from Neisseria meningitidis serogroup C (strain 053442).